Consider the following 791-residue polypeptide: Putative DNA (cytosine-5)-methyltransferase CMT1 (791 aa).

Residues 37–59 (YQSKKTKLQAPTKKPANKGGKKE) form a disordered region. The BAH domain occupies 79–199 (VLINLNDDVY…VPYLNFTSAD (121 aa)). In terms of domain architecture, SAM-dependent MTase C5-type spans 225–768 (KFLLDLYSGC…YAFGMASQGL (544 aa)). Positions 308-333 (VESISELEDEEVEENDDIDEASTGAE) form a coiled coil. Residues 339-404 (FEVEKFLGIM…DGFKSHLLPL (66 aa)) form the Chromo domain. The active site involves C417.

The protein belongs to the class I-like SAM-binding methyltransferase superfamily. C5-methyltransferase family. As to expression, expressed in flowers. Not detected in leaves, roots, seedlings and plants prior formation of flower buds.

Its subcellular location is the nucleus. The catalysed reaction is a 2'-deoxycytidine in DNA + S-adenosyl-L-methionine = a 5-methyl-2'-deoxycytidine in DNA + S-adenosyl-L-homocysteine + H(+). May be involved in the CpXpG methylation and in gene silencing. The protein is Putative DNA (cytosine-5)-methyltransferase CMT1 (CMT1) of Arabidopsis thaliana (Mouse-ear cress).